We begin with the raw amino-acid sequence, 339 residues long: Homeobox protein DBX2 (339 aa).

Residues 186–245 (GILRRAVFSEDQRKALEKMFQKQKYISKTDRKKLAINLGLKESQVKIWFQNRRMKWRNSK) constitute a DNA-binding region (homeobox). Positions 282–318 (VPQQHSSPRWRENSPEPSERLIQESSGAPPPEANSLQ) are disordered. A compositionally biased stretch (basic and acidic residues) spans 290-303 (RWRENSPEPSERLI).

Belongs to the H2.0 homeobox family.

It is found in the nucleus. The chain is Homeobox protein DBX2 (DBX2) from Homo sapiens (Human).